The chain runs to 717 residues: F-box only protein 42 (717 aa).

The segment covering 1-30 has biased composition (acidic residues); it reads MASSSDSEDDSVMAVDQEETALEGTMEQDE. The interval 1 to 34 is disordered; that stretch reads MASSSDSEDDSVMAVDQEETALEGTMEQDEDPHP. In terms of domain architecture, F-box spans 44-93; the sequence is NRSMSELPEEVLEYILSFLSPYQEHKTAALVCKQWYRLIKGVAHQCYHGF. Kelch repeat units lie at residues 132-184, 186-242, 244-293, and 295-342; these read SMYV…VYKD, LVLF…VIGD, MIVF…VIDD, and TLLI…LWCH. A disordered region spans residues 361–452; sequence RAPLSPSLNS…NLSPGTVAVG (92 aa). The span at 363–376 shows a compositional bias: low complexity; that stretch reads PLSPSLNSRPSPIS. A phosphoserine mark is found at Ser365 and Ser373. Thr378 carries the post-translational modification Phosphothreonine. Over residues 416–426 the composition is skewed to polar residues; it reads QRQTPSGSREG. A Phosphoserine modification is found at Ser552. A compositionally biased stretch (low complexity) spans 570–595; it reads GPSASAALSPPLGSSPSSPGSQSLSS. Positions 570 to 632 are disordered; the sequence is GPSASAALSP…HHPPQSLNVG (63 aa).

Component of some SCF complex, composed of CUL1, SKP1, RBX1 and FBXO42. Interacts (via the kelch domain) with p53/TP53; interaction is direct.

Its function is as follows. Substrate-recognition component of some SCF (SKP1-CUL1-F-box protein)-type E3 ubiquitin ligase complex. Specifically recognizes p53/TP53, promoting its ubiquitination and degradation. The protein is F-box only protein 42 (Fbxo42) of Mus musculus (Mouse).